We begin with the raw amino-acid sequence, 341 residues long: Anthranilate phosphoribosyltransferase (341 aa).

Residues Gly79, 82–83 (GD), Thr87, 89–92 (NIST), 107–115 (KHGNRAATS), and Ser119 each bind 5-phospho-alpha-D-ribose 1-diphosphate. Gly79 is an anthranilate binding site. A Mg(2+)-binding site is contributed by Ser91. Asn110 lines the anthranilate pocket. Arg165 lines the anthranilate pocket. The Mg(2+) site is built by Asp224 and Glu225.

This sequence belongs to the anthranilate phosphoribosyltransferase family. Homodimer. Requires Mg(2+) as cofactor.

It catalyses the reaction N-(5-phospho-beta-D-ribosyl)anthranilate + diphosphate = 5-phospho-alpha-D-ribose 1-diphosphate + anthranilate. The protein operates within amino-acid biosynthesis; L-tryptophan biosynthesis; L-tryptophan from chorismate: step 2/5. Its function is as follows. Catalyzes the transfer of the phosphoribosyl group of 5-phosphorylribose-1-pyrophosphate (PRPP) to anthranilate to yield N-(5'-phosphoribosyl)-anthranilate (PRA). The protein is Anthranilate phosphoribosyltransferase of Symbiobacterium thermophilum (strain DSM 24528 / JCM 14929 / IAM 14863 / T).